A 131-amino-acid polypeptide reads, in one-letter code: Ribonuclease P protein component (131 aa).

The protein belongs to the RnpA family. As to quaternary structure, consists of a catalytic RNA component (M1 or rnpB) and a protein subunit.

It catalyses the reaction Endonucleolytic cleavage of RNA, removing 5'-extranucleotides from tRNA precursor.. In terms of biological role, RNaseP catalyzes the removal of the 5'-leader sequence from pre-tRNA to produce the mature 5'-terminus. It can also cleave other RNA substrates such as 4.5S RNA. The protein component plays an auxiliary but essential role in vivo by binding to the 5'-leader sequence and broadening the substrate specificity of the ribozyme. The polypeptide is Ribonuclease P protein component (Cyanothece sp. (strain PCC 7425 / ATCC 29141)).